We begin with the raw amino-acid sequence, 70 residues long: UPF0270 protein VP2791 (70 aa).

This sequence belongs to the UPF0270 family.

The protein is UPF0270 protein VP2791 of Vibrio parahaemolyticus serotype O3:K6 (strain RIMD 2210633).